The chain runs to 952 residues: RNA polymerase-associated protein RapA (952 aa).

The Helicase ATP-binding domain occupies 164–334; it reads EVGRRYAPRV…FARLRLLDPD (171 aa). An ATP-binding site is contributed by 177-184; the sequence is DEVGLGKT. The short motif at 280-283 is the DEAH box element; the sequence is DEAH. In terms of domain architecture, Helicase C-terminal spans 492-668; sequence RVNWLLELLK…GKSDGLESLI (177 aa).

The protein belongs to the SNF2/RAD54 helicase family. RapA subfamily. Interacts with the RNAP. Has a higher affinity for the core RNAP than for the holoenzyme. Its ATPase activity is stimulated by binding to RNAP.

Its function is as follows. Transcription regulator that activates transcription by stimulating RNA polymerase (RNAP) recycling in case of stress conditions such as supercoiled DNA or high salt concentrations. Probably acts by releasing the RNAP, when it is trapped or immobilized on tightly supercoiled DNA. Does not activate transcription on linear DNA. Probably not involved in DNA repair. This Aliivibrio fischeri (strain ATCC 700601 / ES114) (Vibrio fischeri) protein is RNA polymerase-associated protein RapA.